A 96-amino-acid polypeptide reads, in one-letter code: Aspartyl/glutamyl-tRNA(Asn/Gln) amidotransferase subunit C (96 aa).

Belongs to the GatC family. As to quaternary structure, heterotrimer of A, B and C subunits.

The catalysed reaction is L-glutamyl-tRNA(Gln) + L-glutamine + ATP + H2O = L-glutaminyl-tRNA(Gln) + L-glutamate + ADP + phosphate + H(+). The enzyme catalyses L-aspartyl-tRNA(Asn) + L-glutamine + ATP + H2O = L-asparaginyl-tRNA(Asn) + L-glutamate + ADP + phosphate + 2 H(+). Its function is as follows. Allows the formation of correctly charged Asn-tRNA(Asn) or Gln-tRNA(Gln) through the transamidation of misacylated Asp-tRNA(Asn) or Glu-tRNA(Gln) in organisms which lack either or both of asparaginyl-tRNA or glutaminyl-tRNA synthetases. The reaction takes place in the presence of glutamine and ATP through an activated phospho-Asp-tRNA(Asn) or phospho-Glu-tRNA(Gln). The sequence is that of Aspartyl/glutamyl-tRNA(Asn/Gln) amidotransferase subunit C from Bacillus velezensis (strain DSM 23117 / BGSC 10A6 / LMG 26770 / FZB42) (Bacillus amyloliquefaciens subsp. plantarum).